The following is a 101-amino-acid chain: Ubiquitin-related modifier 1 (101 aa).

Residue glycine 101 is modified to 1-thioglycine. Residue glycine 101 forms a Glycyl lysine isopeptide (Gly-Lys) (interchain with K-? in acceptor proteins) linkage.

This sequence belongs to the URM1 family. In terms of processing, C-terminal thiocarboxylation occurs in 2 steps, it is first acyl-adenylated (-COAMP) via the hesA/moeB/thiF part of UBA4, then thiocarboxylated (-COSH) via the rhodanese domain of UBA4.

It is found in the cytoplasm. It functions in the pathway tRNA modification; 5-methoxycarbonylmethyl-2-thiouridine-tRNA biosynthesis. Acts as a sulfur carrier required for 2-thiolation of mcm(5)S(2)U at tRNA wobble positions of cytosolic tRNA(Lys), tRNA(Glu) and tRNA(Gln). Serves as sulfur donor in tRNA 2-thiolation reaction by being thiocarboxylated (-COSH) at its C-terminus by the MOCS3 homolog UBA4. The sulfur is then transferred to tRNA to form 2-thiolation of mcm(5)S(2)U. Prior mcm(5) tRNA modification by the elongator complex is required for 2-thiolation. Also acts as a ubiquitin-like protein (UBL) that is covalently conjugated via an isopeptide bond to lysine residues of target proteins such as AHP1. The thiocarboxylated form serves as substrate for conjugation and oxidative stress specifically induces the formation of UBL-protein conjugates. In Kluyveromyces lactis (strain ATCC 8585 / CBS 2359 / DSM 70799 / NBRC 1267 / NRRL Y-1140 / WM37) (Yeast), this protein is Ubiquitin-related modifier 1.